We begin with the raw amino-acid sequence, 469 residues long: Putative pyridoxal-dependent decarboxylase domain-containing protein 2 (469 aa).

Residues 12 to 40 (TLAEMGKNLKEAVKMLEDSQRRTEEENGK) adopt a coiled-coil conformation. Residues 28–44 (EDSQRRTEEENGKKLIS) are compositionally biased toward basic and acidic residues. Residues 28 to 47 (EDSQRRTEEENGKKLISRDI) form a disordered region.

The protein belongs to the group II decarboxylase family. The cofactor is pyridoxal 5'-phosphate.

In Homo sapiens (Human), this protein is Putative pyridoxal-dependent decarboxylase domain-containing protein 2 (PDXDC2P).